We begin with the raw amino-acid sequence, 297 residues long: MATNLRGVMAALLTPFDQQQALDKASLRRLVQFNIQQGIDGLYVGGSTGEAFVQSLSEREQVLEIVAEETKGKIKLIAHVGCVSTAESQQLAASAKRYGFDAVSAVTPFYYPFSFEEHCDHYRAIIDSADGLPMVVYNIPALSGVKLTLDQINTLVTLPGVGALKQTSGDLYQMEQIRREHPDLVLYNGYDEIFASGLLAGADGGIGSTYNIMGWRYQGIVKALKEGDIQTAQKLQTECNKVIDLLIKTGVFRGLKTVLHYMDVVSVPLCRKPFGPVDEKYLPELKALAQQLMQERG.

Positions 47 and 48 each coordinate aceneuramate. Tyrosine 137 acts as the Proton donor in catalysis. Catalysis depends on lysine 165, which acts as the Schiff-base intermediate with substrate. Threonine 167, glycine 189, aspartate 191, glutamate 192, and serine 208 together coordinate aceneuramate.

It belongs to the DapA family. NanA subfamily. In terms of assembly, homotetramer.

It localises to the cytoplasm. The catalysed reaction is aceneuramate = aldehydo-N-acetyl-D-mannosamine + pyruvate. The protein operates within amino-sugar metabolism; N-acetylneuraminate degradation; D-fructose 6-phosphate from N-acetylneuraminate: step 1/5. Catalyzes the reversible aldol cleavage of N-acetylneuraminic acid (sialic acid; Neu5Ac) to form pyruvate and N-acetylmannosamine (ManNAc) via a Schiff base intermediate. The chain is N-acetylneuraminate lyase from Shigella boydii serotype 4 (strain Sb227).